The sequence spans 160 residues: Cyanate hydratase (160 aa).

Catalysis depends on residues Arg-100, Glu-103, and Ser-126.

Belongs to the cyanase family.

The catalysed reaction is cyanate + hydrogencarbonate + 3 H(+) = NH4(+) + 2 CO2. Functionally, catalyzes the reaction of cyanate with bicarbonate to produce ammonia and carbon dioxide. This is Cyanate hydratase from Neosartorya fischeri (strain ATCC 1020 / DSM 3700 / CBS 544.65 / FGSC A1164 / JCM 1740 / NRRL 181 / WB 181) (Aspergillus fischerianus).